The following is a 1171-amino-acid chain: Putative tricorn protease homolog 2 (1171 aa).

Residues 432–498 form a disordered region; sequence AGYPPDAGDE…GSPGTPATAG (67 aa). Low complexity-rich tracts occupy residues 444–456 and 466–498; these read AGTA…APDA and IAAG…ATAG. His-827 (charge relay system) is an active-site residue. Positions 842 to 941 are PDZ-like; sequence YQRWQGLLGA…RVAVVPLVDE (100 aa). Position 1002–1004 (1002–1004) interacts with substrate; that stretch reads AGG. The active-site Nucleophile is the Ser-1051. 1079 to 1081 is a binding site for substrate; that stretch reads GMT. Residue Glu-1109 is the Charge relay system of the active site. The tract at residues 1149 to 1171 is disordered; sequence PPATPPGYEAVPDRSRPPLPPRE. The span at 1159–1171 shows a compositional bias: basic and acidic residues; sequence VPDRSRPPLPPRE.

The protein belongs to the peptidase S41B family.

The protein localises to the cytoplasm. In terms of biological role, degrades oligopeptides in a sequential manner. The sequence is that of Putative tricorn protease homolog 2 (tri2) from Streptomyces coelicolor (strain ATCC BAA-471 / A3(2) / M145).